The following is a 308-amino-acid chain: Homoserine kinase (308 aa).

Residue P85–A95 participates in ATP binding.

Belongs to the GHMP kinase family. Homoserine kinase subfamily.

It is found in the cytoplasm. The enzyme catalyses L-homoserine + ATP = O-phospho-L-homoserine + ADP + H(+). The protein operates within amino-acid biosynthesis; L-threonine biosynthesis; L-threonine from L-aspartate: step 4/5. Functionally, catalyzes the ATP-dependent phosphorylation of L-homoserine to L-homoserine phosphate. The polypeptide is Homoserine kinase (Caldicellulosiruptor saccharolyticus (strain ATCC 43494 / DSM 8903 / Tp8T 6331)).